A 206-amino-acid chain; its full sequence is 2,3-bisphosphoglycerate-dependent phosphoglycerate mutase (206 aa).

Residues 9–16 (RHGQSEWN), 22–23 (TG), Arg-61, 88–91 (ERDY), Lys-99, 115–116 (RR), and 159–160 (GN) contribute to the substrate site. His-10 acts as the Tele-phosphohistidine intermediate in catalysis. Glu-88 acts as the Proton donor/acceptor in catalysis.

This sequence belongs to the phosphoglycerate mutase family. BPG-dependent PGAM subfamily. As to quaternary structure, homodimer.

The enzyme catalyses (2R)-2-phosphoglycerate = (2R)-3-phosphoglycerate. It functions in the pathway carbohydrate degradation; glycolysis; pyruvate from D-glyceraldehyde 3-phosphate: step 3/5. Catalyzes the interconversion of 2-phosphoglycerate and 3-phosphoglycerate. The polypeptide is 2,3-bisphosphoglycerate-dependent phosphoglycerate mutase (Brucella ovis (strain ATCC 25840 / 63/290 / NCTC 10512)).